Consider the following 151-residue polypeptide: Putative pre-16S rRNA nuclease (151 aa).

This sequence belongs to the YqgF nuclease family.

The protein localises to the cytoplasm. Could be a nuclease involved in processing of the 5'-end of pre-16S rRNA. The protein is Putative pre-16S rRNA nuclease of Methylococcus capsulatus (strain ATCC 33009 / NCIMB 11132 / Bath).